Consider the following 402-residue polypeptide: C2H2 finger domain transcription factor CON7 (402 aa).

Positions 1 to 247 (MLASSRQPRH…GAQQHKRPRR (247 aa)) are disordered. Composition is skewed to polar residues over residues 19–49 (LSSS…TSVG) and 72–86 (CGDN…TVDT). Residues 87–98 (SSAAQYNASAQQ) are compositionally biased toward low complexity. Composition is skewed to polar residues over residues 99–116 (EVRS…TPTS) and 125–151 (ARSS…SSGD). The C2H2-type zinc-finger motif lies at 256–282 (YKCGWQGCEKAYGTLNHLNAHVTMQSH). Residues 289 to 323 (EEFKEIRKEWKARKKEEEAARKADEERQRQAAQSQ) adopt a coiled-coil conformation. The segment covering 302–317 (KKEEEAARKADEERQR) has biased composition (basic and acidic residues). The segment at 302 to 402 (KKEEEAARKA…GSNQAMYNQR (101 aa)) is disordered. Composition is skewed to polar residues over residues 322–341 (SQGG…SSNG), 363–373 (AATSTSVQQQP), and 392–402 (GGSNQAMYNQR).

The protein resides in the nucleus. Transcription factor that plays a central role in appressorium formation and pathogenicity. Required for the expression of a large set of genes including factors that might play a role in membrane metabolism and ergosterol biosynthesis, the chitin-binding protein CBP1,as well as CHS7 that is essential for normal pathogenic development. The sequence is that of C2H2 finger domain transcription factor CON7 from Pyricularia oryzae (strain 70-15 / ATCC MYA-4617 / FGSC 8958) (Rice blast fungus).